A 183-amino-acid polypeptide reads, in one-letter code: Adenine phosphoribosyltransferase (183 aa).

It belongs to the purine/pyrimidine phosphoribosyltransferase family. As to quaternary structure, homodimer.

It is found in the cytoplasm. The catalysed reaction is AMP + diphosphate = 5-phospho-alpha-D-ribose 1-diphosphate + adenine. The protein operates within purine metabolism; AMP biosynthesis via salvage pathway; AMP from adenine: step 1/1. Functionally, catalyzes a salvage reaction resulting in the formation of AMP, that is energically less costly than de novo synthesis. The protein is Adenine phosphoribosyltransferase of Salmonella paratyphi C (strain RKS4594).